The following is a 150-amino-acid chain: Large ribosomal subunit protein uL13 (150 aa).

It belongs to the universal ribosomal protein uL13 family. As to quaternary structure, part of the 50S ribosomal subunit.

Its function is as follows. This protein is one of the early assembly proteins of the 50S ribosomal subunit, although it is not seen to bind rRNA by itself. It is important during the early stages of 50S assembly. This chain is Large ribosomal subunit protein uL13, found in Chlorobaculum parvum (strain DSM 263 / NCIMB 8327) (Chlorobium vibrioforme subsp. thiosulfatophilum).